We begin with the raw amino-acid sequence, 750 residues long: Photosystem I P700 chlorophyll a apoprotein A1 (750 aa).

8 consecutive transmembrane segments (helical) span residues 70-93 (VFSAHFGQLAIIFVWLSGMYFHGA), 156-179 (LYCTAIGALIFATLMLFAGWFHYH), 195-219 (LNHHLAGLLGLGSLAWAGHQVHVSL), 291-309 (TVHHHLAIAVLFLVAGHMY), 346-369 (WHAQLALNLAMLGSLTIIVAHHMY), 385-411 (LSLFTHHMWIGGFLVVGAAAHAAIFMV), 433-455 (AIISHLNWVCIFLGFHSFGLYIH), and 531-549 (FLVHHIHAFTIHVTVLILL). [4Fe-4S] cluster contacts are provided by C573 and C582. Transmembrane regions (helical) follow at residues 589-610 (HVFLGLFWMYNSISIVIFHFSW) and 664-686 (LSAYGLLFLGAHFVWAFSLMFLF). Residue H675 coordinates chlorophyll a'. 2 residues coordinate chlorophyll a: M683 and Y691. Phylloquinone is bound at residue W692. A helical membrane pass occupies residues 724–744 (AVGVAHYLLGGIATTWAFFLA).

The protein belongs to the PsaA/PsaB family. In terms of assembly, the PsaA/B heterodimer binds the P700 chlorophyll special pair and subsequent electron acceptors. PSI consists of a core antenna complex that captures photons, and an electron transfer chain that converts photonic excitation into a charge separation. The eukaryotic PSI reaction center is composed of at least 11 subunits. The cofactor is P700 is a chlorophyll a/chlorophyll a' dimer, A0 is one or more chlorophyll a, A1 is one or both phylloquinones and FX is a shared 4Fe-4S iron-sulfur center..

Its subcellular location is the plastid. It is found in the chloroplast thylakoid membrane. The catalysed reaction is reduced [plastocyanin] + hnu + oxidized [2Fe-2S]-[ferredoxin] = oxidized [plastocyanin] + reduced [2Fe-2S]-[ferredoxin]. In terms of biological role, psaA and PsaB bind P700, the primary electron donor of photosystem I (PSI), as well as the electron acceptors A0, A1 and FX. PSI is a plastocyanin-ferredoxin oxidoreductase, converting photonic excitation into a charge separation, which transfers an electron from the donor P700 chlorophyll pair to the spectroscopically characterized acceptors A0, A1, FX, FA and FB in turn. Oxidized P700 is reduced on the lumenal side of the thylakoid membrane by plastocyanin. In Psilotum nudum (Whisk fern), this protein is Photosystem I P700 chlorophyll a apoprotein A1.